The chain runs to 362 residues: Peptide chain release factor 1 (362 aa).

Gln-235 is modified (N5-methylglutamine).

This sequence belongs to the prokaryotic/mitochondrial release factor family. Post-translationally, methylated by PrmC. Methylation increases the termination efficiency of RF1.

It localises to the cytoplasm. Functionally, peptide chain release factor 1 directs the termination of translation in response to the peptide chain termination codons UAG and UAA. In Buchnera aphidicola subsp. Baizongia pistaciae (strain Bp), this protein is Peptide chain release factor 1.